Consider the following 547-residue polypeptide: Chaperonin GroEL (547 aa).

ATP is bound by residues 30–33, Lys51, 87–91, Gly415, and Asp496; these read TLGP and DGTTT.

It belongs to the chaperonin (HSP60) family. In terms of assembly, forms a cylinder of 14 subunits composed of two heptameric rings stacked back-to-back. Interacts with the co-chaperonin GroES.

The protein localises to the cytoplasm. It carries out the reaction ATP + H2O + a folded polypeptide = ADP + phosphate + an unfolded polypeptide.. Together with its co-chaperonin GroES, plays an essential role in assisting protein folding. The GroEL-GroES system forms a nano-cage that allows encapsulation of the non-native substrate proteins and provides a physical environment optimized to promote and accelerate protein folding. The chain is Chaperonin GroEL from Pelodictyon phaeoclathratiforme (strain DSM 5477 / BU-1).